The sequence spans 1065 residues: Presequence protease, mitochondrial (1065 aa).

The transit peptide at 1–42 directs the protein to the mitochondrion; that stretch reads MLRSFSGAGKCKCRIPVSRQPVCGRSLRISSTLTPWNQSRRA. H117 is a Zn(2+) binding site. Residue E120 is the Proton acceptor of the active site. H121 provides a ligand contact to Zn(2+). E193 is a catalytic residue. E230 is a Zn(2+) binding site.

Belongs to the peptidase M16 family. PreP subfamily. Monomer and homodimer; homodimerization is induced by binding of the substrate. Zn(2+) serves as cofactor.

It is found in the mitochondrion intermembrane space. It localises to the mitochondrion matrix. Degrades mitochondrial transit peptides after their cleavage in the intermembrane space or in the matrix, and presequence peptides; clearance of these peptides is required to keep the presequence processing machinery running. Preferentially cleaves the N-terminal side of paired basic amino acid residues. Also degrades other unstructured peptides. May function as an ATP-dependent peptidase as opposed to a metalloendopeptidase. The polypeptide is Presequence protease, mitochondrial (cym1) (Aspergillus fumigatus (strain ATCC MYA-4609 / CBS 101355 / FGSC A1100 / Af293) (Neosartorya fumigata)).